We begin with the raw amino-acid sequence, 370 residues long: 1-propanol dehydrogenase PduQ (370 aa).

It belongs to the iron-containing alcohol dehydrogenase family. In terms of assembly, interacts with PduP, probably via the N-terminus of PduQ. It depends on Fe cation as a cofactor.

The protein localises to the bacterial microcompartment. The enzyme catalyses 1-propanol + NAD(+) = propanal + NADH + H(+). Its pathway is polyol metabolism; 1,2-propanediol degradation. In terms of biological role, an iron-dependent alcohol dehydrogenase required for optimal 1,2-propanediol (1,2-PD) degradation. NAD(+) and NADH are regenerated internally within the bacterial microcompartment (BMC) dedicated to 1,2-PD degradation by the PduP and PduQ enzymes, which reduce NAD(+) and oxidize NADH respectively, although there must also be cofactor transport across the BMC. Its function is as follows. Expression of a cosmid containing the full 21-gene pdu operon in E.coli allows E.coli to grow on 1,2-propanediol (1,2-PD) with the appearance of bacterial microcompartments (BMC) in its cytoplasm. Functionally, the 1,2-PD-specific bacterial microcompartment (BMC) concentrates low levels of 1,2-PD catabolic enzymes, concentrates volatile reaction intermediates thus enhancing pathway flux and keeps the level of toxic, mutagenic propionaldehyde low. The polypeptide is 1-propanol dehydrogenase PduQ (Citrobacter freundii).